The sequence spans 260 residues: Peptidase inhibitor 15-A (260 aa).

A signal peptide spans 1–21; it reads MNENRLAIDILLLCISCGASA. Positions 22–62 are excised as a propeptide; that stretch reads LAGFSPTASSSLPATNLTDIGFAPPKYLTEAANIPKTRRKR. Asparagine 37 and asparagine 126 each carry an N-linked (GlcNAc...) asparagine glycan. One can recognise an SCP domain in the interval 73–213; sequence LDYHNKVRGK…KRATYLVCNY (141 aa).

This sequence belongs to the CRISP family.

Its subcellular location is the secreted. Serine protease inhibitor which displays weak inhibitory activity against trypsin. May play a role in facial patterning during embryonic development. The polypeptide is Peptidase inhibitor 15-A (pi15a) (Danio rerio (Zebrafish)).